Here is a 151-residue protein sequence, read N- to C-terminus: Ribosome maturation factor RimP (151 aa).

It belongs to the RimP family.

It is found in the cytoplasm. Its function is as follows. Required for maturation of 30S ribosomal subunits. This is Ribosome maturation factor RimP from Photobacterium profundum (strain SS9).